A 391-amino-acid polypeptide reads, in one-letter code: MSIINMTDLDLAGKRVLIRQDLNVPVKGGKVTSDARIKASLGTLKHALEAGAKVMVMSHLGRPTEGEYDSAFSLQPVVDYLNDVLECSVSLASDYLNGVDVKAGELVVLENVRFNVGEKKDDEALSKQYAALCDVYVMDAFGTAHRAQASTHGAGKFAPVACAGPLLAGELEALGKALHNPARPMLAIVGGSKVSTKLTVLESLSNKVDQLIVGGGIANTFIAATGNNVGKSLYEADLIPEANRLLAAAKDAGGNIPVPVDVVTGKEFSEQAQATLKAVSDVADDDMIFDIGPQTATELAELIKNAGTIVWNGPVGVFEFDQFGEGTKAIAMAIAQSNAFSIAGGGDTLAAVDKYGIEDKISYISTGGGAFLEFLEGKALPAVTMLEARGA.

Substrate is bound by residues 21-23, R36, 59-62, R113, and R146; these read DLN and HLGR. ATP contacts are provided by residues K197, E319, and 345 to 348; that span reads GGDT.

It belongs to the phosphoglycerate kinase family. As to quaternary structure, monomer.

Its subcellular location is the cytoplasm. It carries out the reaction (2R)-3-phosphoglycerate + ATP = (2R)-3-phospho-glyceroyl phosphate + ADP. It participates in carbohydrate degradation; glycolysis; pyruvate from D-glyceraldehyde 3-phosphate: step 2/5. The protein is Phosphoglycerate kinase of Pseudoalteromonas atlantica (strain T6c / ATCC BAA-1087).